We begin with the raw amino-acid sequence, 531 residues long: UDP-glucuronosyltransferase 2B13 (531 aa).

Residues 1–24 (MPVKCISVLLLLLQLSCCFSSGSC) form the signal peptide. N-linked (GlcNAc...) asparagine glycans are attached at residues asparagine 69, asparagine 101, and asparagine 317. A helical membrane pass occupies residues 495 to 511 (VIGFLLACVAITTYLIV).

The protein belongs to the UDP-glycosyltransferase family.

It is found in the microsome membrane. The protein resides in the endoplasmic reticulum membrane. The enzyme catalyses glucuronate acceptor + UDP-alpha-D-glucuronate = acceptor beta-D-glucuronoside + UDP + H(+). UDPGT is of major importance in the conjugation and subsequent elimination of potentially toxic xenobiotics and endogenous compounds. Acts on small phenolic agents such as 2-beta-naphthol and 4-methylumbelliferone as well as bulky phenolic compounds like 2-hydroxy- and 4-hydroxybiphenyl. In contrast to 2B16 it is active toward octylgallate. This Oryctolagus cuniculus (Rabbit) protein is UDP-glucuronosyltransferase 2B13 (UGT2B13).